A 500-amino-acid chain; its full sequence is Endothelial lipase (500 aa).

The signal sequence occupies residues 1-20 (MSNSVPLLCFWSLCYCFAAG). Cys-64 and Cys-77 are joined by a disulfide. Asn-80 and Asn-136 each carry an N-linked (GlcNAc...) asparagine glycan. Ser-169 serves as the catalytic Nucleophile. Asp-193 (charge relay system) is an active-site residue. Cys-252 and Cys-272 are disulfide-bonded. The active-site Charge relay system is His-274. 2 cysteine pairs are disulfide-bonded: Cys-297–Cys-316 and Cys-308–Cys-311. 325–337 (KMRNKRNSKMYLK) lines the heparin pocket. Residues 347 to 482 (YHYQMKIHVF…SPGRELWFRK (136 aa)) form the PLAT domain. Residues Asn-393, Asn-469, and Asn-491 are each glycosylated (N-linked (GlcNAc...) asparagine). Cys-463 and Cys-483 form a disulfide bridge.

It belongs to the AB hydrolase superfamily. Lipase family. As to quaternary structure, head to tail homodimer. As to expression, high level of expression in the liver, placenta, lung, thyroid, kidney, testis and in the corpus luteum of the ovary. Expressed also in coronary artery endothelial cells, umbilical vein endothelial cells and in hepatocytes and osteosarcoma cell lines. Not detected in heart, brain and muscle.

It is found in the secreted. The catalysed reaction is a triacylglycerol + H2O = a diacylglycerol + a fatty acid + H(+). The enzyme catalyses a 1,2-diacyl-sn-glycero-3-phosphocholine + H2O = a 2-acyl-sn-glycero-3-phosphocholine + a fatty acid + H(+). It carries out the reaction 1,2,3-tri-(9Z-octadecenoyl)-glycerol + H2O = di-(9Z)-octadecenoylglycerol + (9Z)-octadecenoate + H(+). It catalyses the reaction 1,2,3-tributanoylglycerol + H2O = dibutanoylglycerol + butanoate + H(+). The catalysed reaction is 1,2-dihexadecanoyl-sn-glycero-3-phosphocholine + H2O = hexadecanoyl-sn-glycero-3-phosphocholine + hexadecanoate + H(+). Inhibited by serum and NaCl. In terms of biological role, exerts both phospholipase and triglyceride lipase activities. More active as a phospholipase than a triglyceride lipase. Hydrolyzes triglycerides, both with short-chain fatty acyl groups (tributyrin) and long-chain fatty acyl groups (triolein) with similar levels of activity toward both types of substrates. Hydrolyzes high density lipoproteins (HDL) more efficiently than other lipoproteins. The chain is Endothelial lipase (LIPG) from Homo sapiens (Human).